We begin with the raw amino-acid sequence, 88 residues long: Small ribosomal subunit protein uS15 (88 aa).

This sequence belongs to the universal ribosomal protein uS15 family. In terms of assembly, part of the 30S ribosomal subunit. Forms a bridge to the 50S subunit in the 70S ribosome, contacting the 23S rRNA.

Functionally, one of the primary rRNA binding proteins, it binds directly to 16S rRNA where it helps nucleate assembly of the platform of the 30S subunit by binding and bridging several RNA helices of the 16S rRNA. In terms of biological role, forms an intersubunit bridge (bridge B4) with the 23S rRNA of the 50S subunit in the ribosome. This Francisella tularensis subsp. novicida (strain U112) protein is Small ribosomal subunit protein uS15.